We begin with the raw amino-acid sequence, 368 residues long: Flagellar P-ring protein 1 (368 aa).

The first 24 residues, 1-24 (MIFKQIRRLIAAALLAALSLPAAA), serve as a signal peptide directing secretion.

Belongs to the FlgI family. As to quaternary structure, the basal body constitutes a major portion of the flagellar organelle and consists of four rings (L,P,S, and M) mounted on a central rod.

It is found in the periplasm. It localises to the bacterial flagellum basal body. In terms of biological role, assembles around the rod to form the L-ring and probably protects the motor/basal body from shearing forces during rotation. The polypeptide is Flagellar P-ring protein 1 (Chromobacterium violaceum (strain ATCC 12472 / DSM 30191 / JCM 1249 / CCUG 213 / NBRC 12614 / NCIMB 9131 / NCTC 9757 / MK)).